A 1167-amino-acid chain; its full sequence is Tight junction protein 2 (1167 aa).

Residues Thr-10–Arg-97 enclose the PDZ 1 domain. Ser-107, Ser-127, Ser-130, Ser-140, Ser-145, Ser-147, Ser-173, Ser-194, Ser-205, and Ser-239 each carry phosphoserine. Positions Arg-129–Leu-195 are disordered. The tract at residues Ser-225–Ile-286 is disordered. Residues Tyr-242 to Arg-262 show a composition bias toward basic and acidic residues. Residues Gly-287–Ser-365 enclose the PDZ 2 domain. A phosphoserine mark is found at Ser-305, Ser-378, Ser-380, Ser-386, Ser-395, Ser-404, Ser-410, and Ser-411. A disordered region spans residues Glu-381–Ile-485. The span at Ser-395–Ser-426 shows a compositional bias: basic and acidic residues. Thr-435 is modified (phosphothreonine). Ser-479 carries the post-translational modification Phosphoserine. The 82-residue stretch at Asn-489–Ser-570 folds into the PDZ 3 domain. Phosphotyrosine is present on Tyr-554. An SH3 domain is found at Gly-584–Ala-649. In terms of domain architecture, Guanylate kinase-like spans Gly-660–Gln-858. Ser-684 and Ser-884 each carry phosphoserine. Thr-887 is subject to Phosphothreonine. Phosphoserine is present on residues Ser-895 and Ser-902. Disordered stretches follow at residues Phe-904–Val-1055 and Tyr-1095–Leu-1167. Thr-907 and Thr-915 each carry phosphothreonine. The span at Val-938 to Pro-949 shows a compositional bias: basic and acidic residues. Ser-948, Ser-960, Ser-968, Ser-988, and Ser-1044 each carry phosphoserine. Positions Glu-976–Asp-990 are enriched in basic and acidic residues. Positions Glu-1037–Glu-1049 are enriched in acidic residues. Phosphotyrosine is present on Tyr-1095. Phosphoserine is present on residues Ser-1124 and Ser-1136. The interval Thr-1165–Leu-1167 is interaction with SCRIB.

The protein belongs to the MAGUK family. As to quaternary structure, homodimer. Interacts (via PDZ2 domain) with TJP1/ZO1 (via PDZ2 domain). Interacts with UBN1. Interacts with SCRIB. Interacts with OCLN. Interacts with SAFB in the nucleus. Interacts with USP53 (via the C-terminal region). Interacts with claudins, including CLDN1, CLDN2, CLDN3, CLDN5 and CLDN7. Interacts with CLDN18. Interacts (via N-terminus) with CTNNA1.

Its subcellular location is the cell junction. The protein localises to the adherens junction. It is found in the cell membrane. It localises to the nucleus. The protein resides in the tight junction. Functionally, plays a role in tight junctions and adherens junctions. Acts as a positive regulator of RANKL-induced osteoclast differentiation, potentially via mediating downstream transcriptional activity. The chain is Tight junction protein 2 from Mus musculus (Mouse).